The sequence spans 261 residues: Proliferating cell nuclear antigen (261 aa).

N6-acetyllysine occurs at positions 14, 77, and 80. The DNA-binding element occupies 61–80 (RCDRNLAMGVNLTSMSKILK). Cysteines 135 and 162 form a disulfide. Residue Lys-164 forms a Glycyl lysine isopeptide (Lys-Gly) (interchain with G-Cter in SUMO2); alternate linkage. Residue Lys-164 forms a Glycyl lysine isopeptide (Lys-Gly) (interchain with G-Cter in ubiquitin); alternate linkage. Tyr-211 carries the post-translational modification Phosphotyrosine; by EGFR. Lys-248 carries the N6-acetyllysine modification. Residue Lys-254 forms a Glycyl lysine isopeptide (Lys-Gly) (interchain with G-Cter in SUMO2) linkage.

It belongs to the PCNA family. In terms of assembly, homotrimer. Interacts with p300/EP300; the interaction occurs on chromatin in UV-irradiated damaged cells. Interacts with CREBBP (via transactivation domain and C-terminus); the interaction occurs on chromatin in UV-irradiated damaged cells. Directly interacts with POLD1, POLD3 and POLD4 subunits of the DNA polymerase delta complex, POLD3 being the major interacting partner; the interaction with POLD3 is inhibited by CDKN1A/p21(CIP1). Forms a complex with activator 1 heteropentamer in the presence of ATP. Interacts with EXO1, POLH, POLK, DNMT1, ERCC5, FEN1, CDC6 and POLDIP2. Interacts with POLB. Interacts with APEX2; this interaction is triggered by reactive oxygen species and increased by misincorporation of uracil in nuclear DNA. Forms a ternary complex with DNTTIP2 and core histone. Interacts with KCTD10. Interacts with PPP1R15A. Interacts with SMARCA5/SNF2H. Interacts with BAZ1B/WSTF; the interaction is direct and is required for BAZ1B/WSTF binding to replication foci during S phase. Interacts with HLTF and SHPRH. Interacts with NUDT15. Interaction is disrupted in response to UV irradiation and acetylation. Interacts with CDKN1A/p21(CIP1) and CDT1; interacts via their PIP-box which also recruits the DCX(DTL) complex. The interaction with CDKN1A inhibits POLD3 binding. Interacts with DDX11. Interacts with EGFR; positively regulates PCNA. Interacts with PARPBP. Interacts (when ubiquitinated) with SPRTN; leading to enhance RAD18-mediated PCNA ubiquitination. Interacts (when polyubiquitinated) with ZRANB3. Interacts with SMARCAD1. Interacts with CDKN1C. Interacts with PCLAF (via PIP-box). Interacts with RTEL1 (via PIP-box); the interaction is direct and essential for the suppression of telomere fragility. Interacts with FAM111A (via PIP-box); the interaction is direct and required for PCNA loading on chromatin binding. Interacts with LIG1. Interacts with SETMAR. Interacts with ANKRD17. Interacts with FBXO18/FBH1 (via PIP-box); the interaction recruits the DCX(DTL) complex and promotes ubiquitination and degradation of FBXO18/FBH1. Interacts with POLN. Interacts with SDE2 (via PIP-box); the interaction is direct and prevents ultraviolet light induced monoubiquitination. Component of the replisome complex composed of at least DONSON, MCM2, MCM7, PCNA and TICRR; interaction at least with PCNA occurs during DNA replication. Interacts with MAPK15; the interaction is chromatin binding dependent and prevents MDM2-mediated PCNA destruction by inhibiting the association of PCNA with MDM2. Interacts with PARP10 (via PIP-box). Interacts with DDI2. Interacts with HMCES (via PIP-box). Interacts with TRAIP (via PIP-box). Interacts with UHRF2. Interacts with ALKBH2; this interaction is enhanced during the S-phase of the cell cycle. Interacts with ATAD5; the interaction promotes USP1-mediated PCNA deubiquitination. Interacts (when phosphorylated) with GRB2. Interacts with ANG. Interacts with nuclear UNG; this interaction mediates UNG recruitment to S-phase replication foci. Interacts with ERCC6L2 (via an atypical PIP-box); this interaction facilitates cenrtomeric localization of ERCC6L2. Phosphorylated. Phosphorylation at Tyr-211 by EGFR stabilizes chromatin-associated PCNA. Post-translationally, acetylated by CREBBP and p300/EP300; preferentially acetylated by CREBBP on Lys-80, Lys-13 and Lys-14 and on Lys-77 by p300/EP300 upon loading on chromatin in response to UV irradiation. Lysine acetylation disrupts association with chromatin, hence promoting PCNA ubiquitination and proteasomal degradation in response to UV damage in a CREBBP- and EP300-dependent manner. Acetylation disrupts interaction with NUDT15 and promotes degradation. In terms of processing, ubiquitinated. Following DNA damage, can be either monoubiquitinated to stimulate direct bypass of DNA lesions by specialized DNA polymerases or polyubiquitinated to promote recombination-dependent DNA synthesis across DNA lesions by template switching mechanisms. Following induction of replication stress, monoubiquitinated by the UBE2B-RAD18 complex on Lys-164, leading to recruit translesion (TLS) polymerases, which are able to synthesize across DNA lesions in a potentially error-prone manner. An error-free pathway also exists and requires non-canonical polyubiquitination on Lys-164 through 'Lys-63' linkage of ubiquitin moieties by the E2 complex UBE2N-UBE2V2 and the E3 ligases, HLTF, RNF8 and SHPRH. This error-free pathway, also known as template switching, employs recombination mechanisms to synthesize across the lesion, using as a template the undamaged, newly synthesized strand of the sister chromatid. Monoubiquitination at Lys-164 also takes place in undamaged proliferating cells, and is mediated by the DCX(DTL) complex, leading to enhance PCNA-dependent translesion DNA synthesis. Sumoylated during S phase. Methylated on glutamate residues by ARMT1.

It localises to the nucleus. Functionally, auxiliary protein of DNA polymerase delta and epsilon, is involved in the control of eukaryotic DNA replication by increasing the polymerase's processibility during elongation of the leading strand. Induces a robust stimulatory effect on the 3'-5' exonuclease and 3'-phosphodiesterase, but not apurinic-apyrimidinic (AP) endonuclease, APEX2 activities. Has to be loaded onto DNA in order to be able to stimulate APEX2. Plays a key role in DNA damage response (DDR) by being conveniently positioned at the replication fork to coordinate DNA replication with DNA repair and DNA damage tolerance pathways. Acts as a loading platform to recruit DDR proteins that allow completion of DNA replication after DNA damage and promote postreplication repair: Monoubiquitinated PCNA leads to recruitment of translesion (TLS) polymerases, while 'Lys-63'-linked polyubiquitination of PCNA is involved in error-free pathway and employs recombination mechanisms to synthesize across the lesion. This chain is Proliferating cell nuclear antigen (Pcna), found in Rattus norvegicus (Rat).